The chain runs to 212 residues: ATP phosphoribosyltransferase (212 aa).

The protein belongs to the ATP phosphoribosyltransferase family. Short subfamily. As to quaternary structure, heteromultimer composed of HisG and HisZ subunits.

The protein localises to the cytoplasm. It carries out the reaction 1-(5-phospho-beta-D-ribosyl)-ATP + diphosphate = 5-phospho-alpha-D-ribose 1-diphosphate + ATP. The protein operates within amino-acid biosynthesis; L-histidine biosynthesis; L-histidine from 5-phospho-alpha-D-ribose 1-diphosphate: step 1/9. Functionally, catalyzes the condensation of ATP and 5-phosphoribose 1-diphosphate to form N'-(5'-phosphoribosyl)-ATP (PR-ATP). Has a crucial role in the pathway because the rate of histidine biosynthesis seems to be controlled primarily by regulation of HisG enzymatic activity. The polypeptide is ATP phosphoribosyltransferase (Clostridium botulinum (strain Langeland / NCTC 10281 / Type F)).